The primary structure comprises 317 residues: Melanocyte-stimulating hormone receptor (317 aa).

Residues 1 to 37 lie on the Extracellular side of the membrane; sequence MPMQGAQRRLLGSLNSTPTATPNLGLAANHTGAPCLE. N-linked (GlcNAc...) asparagine glycosylation is present at Asn-29. The helical transmembrane segment at 38–63 threads the bilayer; that stretch reads VSIPDGLFLSLGLVSLVENVLVVAAI. The Cytoplasmic segment spans residues 64–72; it reads AKNRNLHSP. The chain crosses the membrane as a helical span at residues 73-93; sequence MYCFICCLALSDLLVSGSNML. Over 94–118 the chain is Extracellular; it reads EMAVILLLEAGALATRASVVQQLQN. The chain crosses the membrane as a helical span at residues 119–140; that stretch reads TIDVLTCSSMLCSLCFLGAIAV. Topologically, residues 141-163 are cytoplasmic; sequence DRYVSIFYALRYHSIVTLPRARR. The helical transmembrane segment at 164–183 threads the bilayer; the sequence is AIAAIWVASVLSSTLFIAYC. Residues 184-191 lie on the Extracellular side of the membrane; it reads DHAAVLLC. Residues 192 to 211 form a helical membrane-spanning segment; the sequence is LVVFFLAMLVLMAVLYVHML. Over 212-240 the chain is Cytoplasmic; that stretch reads ARACQHAQGITRLHKRQLPAHQGFGLRGA. Residues 241-266 traverse the membrane as a helical segment; it reads ATLTILLGIFFVCWGPFFLHLMLVVL. Over 267 to 279 the chain is Extracellular; sequence CPQHLTCSCIFKN. Residues 280-300 form a helical membrane-spanning segment; sequence FKVFLTLIICNTIIDPLIYAF. Residues 301-317 are Cytoplasmic-facing; the sequence is RSQELCRTLKEVLLCSW. Residue Cys-315 is the site of S-palmitoyl cysteine attachment.

The protein belongs to the G-protein coupled receptor 1 family. As to quaternary structure, interacts with MGRN1, but does not undergo MGRN1-mediated ubiquitination; this interaction competes with GNAS-binding and thus inhibits agonist-induced cAMP production. Interacts with OPN3; the interaction results in a decrease in MC1R-mediated cAMP signaling and ultimately a decrease in melanin production in melanocytes.

Its subcellular location is the cell membrane. Receptor for MSH (alpha, beta and gamma) and ACTH. The activity of this receptor is mediated by G proteins which activate adenylate cyclase. Mediates melanogenesis, the production of eumelanin (black/brown) and phaeomelanin (red/yellow), via regulation of cAMP signaling in melanocytes. The sequence is that of Melanocyte-stimulating hormone receptor (MC1R) from Alouatta sara (Bolivian red howler monkey).